Consider the following 180-residue polypeptide: MIEIRFHGRGGQGAVTAAEILAKAAFEDGKYSQAFPFFGVERRGAPVMAFTRIDDSPVRRRYQVYNPDYVVVLDEGLVDVVDVFSGLKDDGVVVLNKSGDFQGGDVKVHTIDATGIALETLGRPIVNTVMLGAFAGVTGLVSIDSLIKIIKETFPGKIGEKNAEAARMAYEEIEKLRVNM.

In terms of assembly, heterotetramer of one alpha, one beta, one delta and one gamma chain.

The catalysed reaction is 2 oxidized [2Fe-2S]-[ferredoxin] + pyruvate + CoA = 2 reduced [2Fe-2S]-[ferredoxin] + acetyl-CoA + CO2 + H(+). The polypeptide is Pyruvate synthase subunit PorC (porC) (Methanothermobacter thermautotrophicus (strain ATCC 29096 / DSM 1053 / JCM 10044 / NBRC 100330 / Delta H) (Methanobacterium thermoautotrophicum)).